The sequence spans 375 residues: MKFELDTTDGRARRGRLVFDRGVVETPAFMPVGTYGTVKGMTPEEVEATGAQIILGNTFHLWLRPGQEIMKLHGDLHDFMQWKGPILTDSGGFQVFSLGDIRKITEQGVHFRNPINGDPIFLDPEKSMEIQYDLGSDIVMIFDECTPYPADWDYAKRSMEMSLRWAKRSRDRFDSLGNKNALFGIIQGSVYEDLRDISVKGLVEIGFDGYAVGGLAVGEPKADMHRILEHVCPQIPADKPRYLMGVGKPEDLVEGVRRGIDMFDCVMPTRNARNGHLFVTDGVVKIRNAKHKSDTSPLDAECDCYTCRNYSRAYLHHLDRCNEILGARLNTIHNLRYYQRLMAGLRKAIEEGKLESFVTKFYQRQGRPVPPLNVD.

Catalysis depends on D89, which acts as the Proton acceptor. Substrate contacts are provided by residues 89 to 93 (DSGGF), D143, Q187, and G214. Positions 245-251 (GVGKPED) are RNA binding. The Nucleophile role is filled by D264. Residues 269–273 (TRNAR) form an RNA binding; important for wobble base 34 recognition region. Zn(2+)-binding residues include C302, C304, C307, and H333.

It belongs to the queuine tRNA-ribosyltransferase family. In terms of assembly, homodimer. Within each dimer, one monomer is responsible for RNA recognition and catalysis, while the other monomer binds to the replacement base PreQ1. It depends on Zn(2+) as a cofactor.

The enzyme catalyses 7-aminomethyl-7-carbaguanine + guanosine(34) in tRNA = 7-aminomethyl-7-carbaguanosine(34) in tRNA + guanine. It participates in tRNA modification; tRNA-queuosine biosynthesis. Its function is as follows. Catalyzes the base-exchange of a guanine (G) residue with the queuine precursor 7-aminomethyl-7-deazaguanine (PreQ1) at position 34 (anticodon wobble position) in tRNAs with GU(N) anticodons (tRNA-Asp, -Asn, -His and -Tyr). Catalysis occurs through a double-displacement mechanism. The nucleophile active site attacks the C1' of nucleotide 34 to detach the guanine base from the RNA, forming a covalent enzyme-RNA intermediate. The proton acceptor active site deprotonates the incoming PreQ1, allowing a nucleophilic attack on the C1' of the ribose to form the product. After dissociation, two additional enzymatic reactions on the tRNA convert PreQ1 to queuine (Q), resulting in the hypermodified nucleoside queuosine (7-(((4,5-cis-dihydroxy-2-cyclopenten-1-yl)amino)methyl)-7-deazaguanosine). The protein is Queuine tRNA-ribosyltransferase of Salmonella choleraesuis (strain SC-B67).